A 195-amino-acid polypeptide reads, in one-letter code: NADH-quinone oxidoreductase subunit B (195 aa).

Cys74, Cys75, Cys139, and Cys169 together coordinate [4Fe-4S] cluster.

Belongs to the complex I 20 kDa subunit family. In terms of assembly, NDH-1 is composed of 14 different subunits. Subunits NuoB, C, D, E, F, and G constitute the peripheral sector of the complex. It depends on [4Fe-4S] cluster as a cofactor.

It localises to the cell inner membrane. The catalysed reaction is a quinone + NADH + 5 H(+)(in) = a quinol + NAD(+) + 4 H(+)(out). NDH-1 shuttles electrons from NADH, via FMN and iron-sulfur (Fe-S) centers, to quinones in the respiratory chain. The immediate electron acceptor for the enzyme in this species is believed to be ubiquinone. Couples the redox reaction to proton translocation (for every two electrons transferred, four hydrogen ions are translocated across the cytoplasmic membrane), and thus conserves the redox energy in a proton gradient. This Methylobacterium sp. (strain 4-46) protein is NADH-quinone oxidoreductase subunit B.